The sequence spans 64 residues: Conotoxin Mr3.5 (64 aa).

An N-terminal signal peptide occupies residues 1-19 (MSKLGVLLTICLLLFPLTA). The propeptide occupies 20–46 (LPLDGDQPADQRAERTQAEKHSLPDPR). 3 cysteine pairs are disulfide-bonded: Cys-49–Cys-58, Cys-50–Cys-62, and Cys-54–Cys-63. Cys-63 is modified (cysteine amide).

This sequence belongs to the conotoxin M superfamily. As to expression, expressed by the venom duct.

It localises to the secreted. In Conus marmoreus (Marble cone), this protein is Conotoxin Mr3.5.